A 494-amino-acid chain; its full sequence is Glutamyl-tRNA(Gln) amidotransferase subunit A (494 aa).

Residues Lys80 and Ser160 each act as charge relay system in the active site. A disordered region spans residues 140–168 (GNVISPWRRPGDTAPLAPGGSSGGSSSAV). The active-site Acyl-ester intermediate is Ser184.

This sequence belongs to the amidase family. GatA subfamily. In terms of assembly, heterotrimer of A, B and C subunits.

The enzyme catalyses L-glutamyl-tRNA(Gln) + L-glutamine + ATP + H2O = L-glutaminyl-tRNA(Gln) + L-glutamate + ADP + phosphate + H(+). In terms of biological role, allows the formation of correctly charged Gln-tRNA(Gln) through the transamidation of misacylated Glu-tRNA(Gln) in organisms which lack glutaminyl-tRNA synthetase. The reaction takes place in the presence of glutamine and ATP through an activated gamma-phospho-Glu-tRNA(Gln). The polypeptide is Glutamyl-tRNA(Gln) amidotransferase subunit A (Novosphingobium aromaticivorans (strain ATCC 700278 / DSM 12444 / CCUG 56034 / CIP 105152 / NBRC 16084 / F199)).